The sequence spans 361 residues: Zygote arrest protein 1 (361 aa).

3 disordered regions span residues 1 to 23 (MFPA…AGDG), 98 to 128 (QPAG…PRSW), and 148 to 252 (VAGG…EQDK). Thr154 carries the phosphothreonine; by CDK1 modification. Ser161 is modified (phosphoserine; by CDK1). The span at 168-177 (REPEPREVAA) shows a compositional bias: basic and acidic residues. A 3CxxC-type zinc finger spans residues 263–346 (KYGYYHCKDC…RQDLCGRCKD (84 aa)).

Belongs to the ZAR1 family. In terms of assembly, interacts with YBX2. Phosphorylation by CDK1 does not regulate formation of MARDO (mitochondria-associated ribonucleoprotein domain) membraneless compartment. Post-translationally, ubiquitinated and degradaded by the proteasome during oocyte meiotic maturation, leading to MARDO (mitochondria-associated ribonucleoprotein domain) membraneless compartment dissolution. Ovary. Expressed in primary oocytes (from primary through antral follicle stages) and during the progression from Meiosis I to Meiosis II. The mRNA is detected in growing oocytes (early primary follicle, type 3a) through fully grown oocytes (antral follicle, type 8).

Its subcellular location is the cytoplasm. The protein resides in the cytoplasmic ribonucleoprotein granule. MRNA-binding protein that mediates formation of MARDO (mitochondria-associated ribonucleoprotein domain), a membraneless compartment that stores maternal mRNAs in oocytes. MARDO assembly around mitochondria is directed by an increase in mitochondrial membrane potential during oocyte growth. Promotes formation of MARDO phase-separated membraneless compartment by undergoing liquid-liquid phase separation upon binding to maternal mRNAs. Binds to the 3'-UTR of maternal mRNAs. Maternal mRNAs stored in the MARDO are translationally repressed. Essential for female fertility and oocyte-to-embryo transition by coordinating maternal mRNA storage, translation and degradation. This chain is Zygote arrest protein 1, found in Mus musculus (Mouse).